The following is a 312-amino-acid chain: Pollen allergen Phl p 5.0101 (312 aa).

The N-terminal stretch at 1–25 (MAVHQYTVALFLAVALVAGPAASYA) is a signal peptide.

It belongs to the Poa p IX/Phl p VI allergen family.

The protein localises to the secreted. This chain is Pollen allergen Phl p 5.0101, found in Phleum pratense (Common timothy).